The sequence spans 417 residues: Gamma-glutamyl phosphate reductase (417 aa).

This sequence belongs to the gamma-glutamyl phosphate reductase family.

It localises to the cytoplasm. The enzyme catalyses L-glutamate 5-semialdehyde + phosphate + NADP(+) = L-glutamyl 5-phosphate + NADPH + H(+). It functions in the pathway amino-acid biosynthesis; L-proline biosynthesis; L-glutamate 5-semialdehyde from L-glutamate: step 2/2. Functionally, catalyzes the NADPH-dependent reduction of L-glutamate 5-phosphate into L-glutamate 5-semialdehyde and phosphate. The product spontaneously undergoes cyclization to form 1-pyrroline-5-carboxylate. This is Gamma-glutamyl phosphate reductase from Haemophilus influenzae (strain ATCC 51907 / DSM 11121 / KW20 / Rd).